Reading from the N-terminus, the 312-residue chain is 3-methyl-2-oxobutanoate hydroxymethyltransferase (312 aa).

Belongs to the PanB family.

It carries out the reaction 3-methyl-2-oxobutanoate + (6R)-5,10-methylene-5,6,7,8-tetrahydrofolate + H2O = 2-dehydropantoate + (6S)-5,6,7,8-tetrahydrofolate. The protein operates within cofactor biosynthesis; (R)-pantothenate biosynthesis; (R)-pantoate from 3-methyl-2-oxobutanoate: step 1/2. Its function is as follows. Probable 3-methyl-2-oxobutanoate hydroxymethyltransferase required for pantothenic acid biosynthesis. Acts downstream in the pantothenic acid pathway. The sequence is that of 3-methyl-2-oxobutanoate hydroxymethyltransferase from Saccharomyces cerevisiae (strain ATCC 204508 / S288c) (Baker's yeast).